The following is a 283-amino-acid chain: Cyclin-C (283 aa).

The Cyclin N-terminal domain maps to 46–144 (NVIQALGEHL…ILECEFYLLE (99 aa)). The tract at residues 252-283 (TILSKMPKPKPPPNSEGEQGPNGSQNSSYSQS) is disordered. The segment covering 272–283 (PNGSQNSSYSQS) has biased composition (polar residues). Serine 275 bears the Phosphoserine mark.

Belongs to the cyclin family. Cyclin C subfamily. Component of the Mediator complex, which is composed of MED1, MED4, MED6, MED7, MED8, MED9, MED10, MED11, MED12, MED13, MED13L, MED14, MED15, MED16, MED17, MED18, MED19, MED20, MED21, MED22, MED23, MED24, MED25, MED26, MED27, MED29, MED30, MED31, CCNC, CDK8 and CDC2L6/CDK11. The MED12, MED13, CCNC and CDK8 subunits form a distinct module termed the CDK8 module. Mediator containing the CDK8 module is less active than Mediator lacking this module in supporting transcriptional activation. Individual preparations of the Mediator complex lacking one or more distinct subunits have been variously termed ARC, CRSP, DRIP, PC2, SMCC and TRAP. The cylin/CDK pair formed by CCNC/CDK8 also associates with the large subunit of RNA polymerase II. In terms of tissue distribution, highest levels in pancreas. High levels in heart, liver, skeletal muscle and kidney. Low levels in brain.

It is found in the nucleus. Functionally, component of the Mediator complex, a coactivator involved in regulated gene transcription of nearly all RNA polymerase II-dependent genes. Mediator functions as a bridge to convey information from gene-specific regulatory proteins to the basal RNA polymerase II transcription machinery. Mediator is recruited to promoters by direct interactions with regulatory proteins and serves as a scaffold for the assembly of a functional preinitiation complex with RNA polymerase II and the general transcription factors. Binds to and activates cyclin-dependent kinase CDK8 that phosphorylates the CTD (C-terminal domain) of the large subunit of RNA polymerase II (RNAp II), which may inhibit the formation of a transcription initiation complex. In Homo sapiens (Human), this protein is Cyclin-C (CCNC).